We begin with the raw amino-acid sequence, 356 residues long: Tetraacyldisaccharide 4'-kinase (356 aa).

67-74 provides a ligand contact to ATP; that stretch reads FVGGTGKT.

The protein belongs to the LpxK family.

It carries out the reaction a lipid A disaccharide + ATP = a lipid IVA + ADP + H(+). It functions in the pathway glycolipid biosynthesis; lipid IV(A) biosynthesis; lipid IV(A) from (3R)-3-hydroxytetradecanoyl-[acyl-carrier-protein] and UDP-N-acetyl-alpha-D-glucosamine: step 6/6. In terms of biological role, transfers the gamma-phosphate of ATP to the 4'-position of a tetraacyldisaccharide 1-phosphate intermediate (termed DS-1-P) to form tetraacyldisaccharide 1,4'-bis-phosphate (lipid IVA). In Herminiimonas arsenicoxydans, this protein is Tetraacyldisaccharide 4'-kinase.